The primary structure comprises 522 residues: Maturase K (522 aa).

This sequence belongs to the intron maturase 2 family. MatK subfamily.

It is found in the plastid. The protein localises to the chloroplast. In terms of biological role, usually encoded in the trnK tRNA gene intron. Probably assists in splicing its own and other chloroplast group II introns. This chain is Maturase K, found in Tigridia pavonia (Mexican shell flower).